A 317-amino-acid chain; its full sequence is MAIGNWTEISEFILMSFSSLPTEIQSLLFLTFLTIYLVTLKGNSLIILVTLADPMLHSPMYFFLRNLSFLEIGFNLVIVPKMLGTLLAQDTTISFLGCATQMYFFFFFGVAECFLLATMAYDRYVAICSPLHYPVIMNQRTRAKLAAASWFPGFPVATVQTTWLFSFPFCGTNKVNHFFCDSPPVLKLVCADTALFEIYAIVGTILVVMIPCLLILCSYTRIAAAILKIPSAKGKHKAFSTCSSHLLVVSLFYISSSLTYFWPKSNNSPESKKLLSLSYTVVTPMLNPIIYSLRNSEVKNALSRTFHKVLALRNCIP.

Residues Met1 to Ser26 are Extracellular-facing. Residue Asn5 is glycosylated (N-linked (GlcNAc...) asparagine). Residues Leu27–Ile47 traverse the membrane as a helical segment. Over Leu48–Met55 the chain is Cytoplasmic. A helical transmembrane segment spans residues Leu56–Leu76. Over Val77–Thr100 the chain is Extracellular. Cys98 and Cys190 form a disulfide bridge. Residues Gln101–Tyr121 form a helical membrane-spanning segment. Residues Asp122–Arg140 are Cytoplasmic-facing. A helical transmembrane segment spans residues Thr141–Thr161. Residues Thr162–Ile198 are Extracellular-facing. The helical transmembrane segment at Tyr199–Ser218 threads the bilayer. The Cytoplasmic segment spans residues Tyr219–Ala238. The helical transmembrane segment at Phe239–Thr259 threads the bilayer. Over Tyr260–Lys272 the chain is Extracellular. Residues Lys273–Leu293 form a helical membrane-spanning segment. At Arg294–Pro317 the chain is on the cytoplasmic side.

It belongs to the G-protein coupled receptor 1 family. Expressed in the tongue.

It is found in the cell membrane. Odorant receptor (Potential). May be involved in taste perception. The protein is Olfactory receptor 10A5 (OR10A5) of Homo sapiens (Human).